A 714-amino-acid polypeptide reads, in one-letter code: Transcription factor SFL2 (714 aa).

Residues 15–134 mediate DNA binding; it reads AFVHKLYTML…LVYIKRRSSS (120 aa). Disordered regions lie at residues 187-467, 565-658, and 670-714; these read YYQQ…VGVT, STSV…NNTN, and SHSQ…NMNK. 2 stretches are compositionally biased toward pro residues: residues 193–207 and 223–235; these read GQVP…PPHQ and QPPP…PPQP. Residues 266-275 are compositionally biased toward polar residues; sequence LDQTQPLSYT. Residues 276–285 are compositionally biased toward low complexity; that stretch reads PQLEYQQQQY. Over residues 286-296 the composition is skewed to pro residues; it reads PQPPLPPPPPQ. 2 stretches are compositionally biased toward polar residues: residues 310 to 321 and 354 to 372; these read DNLSRPSPNEQH and SEGS…LNNE. Positions 376 to 389 are enriched in low complexity; that stretch reads ESSTSSSSTTVTST. Polar residues-rich tracts occupy residues 413–435 and 444–461; these read SRMN…TQNG and LIPS…TGTD. The span at 574–591 shows a compositional bias: low complexity; that stretch reads GPFSTSTSTSTTSPTLSS. A compositionally biased stretch (polar residues) spans 599–608; it reads EPQNSTIANG. Low complexity-rich tracts occupy residues 609–641 and 648–658; these read TSIR…RQLS and QQQQQPNNNTN. A compositionally biased stretch (basic and acidic residues) spans 703-714; sequence SKSDDDTDNMNK.

The protein belongs to the HSF family.

It localises to the nucleus. Its function is as follows. Transcription factor that plays a role of activator of filamentous growth and which is involved in invasive growth at a high temperature. Required for human oral epithelium colonization and damage. Promotes filamentous growth in EFG1- and FLO8-dependent manners. Antagonizes functions of SFL1. The chain is Transcription factor SFL2 (SFL2) from Candida albicans (strain SC5314 / ATCC MYA-2876) (Yeast).